Consider the following 498-residue polypeptide: ATP synthase subunit beta, chloroplastic (498 aa).

An ATP-binding site is contributed by 172–179; the sequence is GGAGVGKT.

The protein belongs to the ATPase alpha/beta chains family. As to quaternary structure, F-type ATPases have 2 components, CF(1) - the catalytic core - and CF(0) - the membrane proton channel. CF(1) has five subunits: alpha(3), beta(3), gamma(1), delta(1), epsilon(1). CF(0) has four main subunits: a(1), b(1), b'(1) and c(9-12).

The protein resides in the plastid. It is found in the chloroplast thylakoid membrane. It carries out the reaction ATP + H2O + 4 H(+)(in) = ADP + phosphate + 5 H(+)(out). Produces ATP from ADP in the presence of a proton gradient across the membrane. The catalytic sites are hosted primarily by the beta subunits. This Licuala grandis (Ruffled fan palm) protein is ATP synthase subunit beta, chloroplastic.